A 358-amino-acid polypeptide reads, in one-letter code: Methylthioribose-1-phosphate isomerase (358 aa).

Substrate contacts are provided by residues 54–56, R96, and Q205; that span reads RGA. D246 acts as the Proton donor in catalysis. Residue 256-257 coordinates substrate; the sequence is NK.

Belongs to the eIF-2B alpha/beta/delta subunits family. MtnA subfamily.

It carries out the reaction 5-(methylsulfanyl)-alpha-D-ribose 1-phosphate = 5-(methylsulfanyl)-D-ribulose 1-phosphate. Its pathway is amino-acid biosynthesis; L-methionine biosynthesis via salvage pathway; L-methionine from S-methyl-5-thio-alpha-D-ribose 1-phosphate: step 1/6. Catalyzes the interconversion of methylthioribose-1-phosphate (MTR-1-P) into methylthioribulose-1-phosphate (MTRu-1-P). This is Methylthioribose-1-phosphate isomerase from Stutzerimonas stutzeri (strain A1501) (Pseudomonas stutzeri).